Reading from the N-terminus, the 240-residue chain is Pyridoxine 5'-phosphate synthase (240 aa).

3-amino-2-oxopropyl phosphate is bound at residue Asn-7. 9 to 10 (DH) provides a ligand contact to 1-deoxy-D-xylulose 5-phosphate. Residue Arg-18 coordinates 3-amino-2-oxopropyl phosphate. His-43 (proton acceptor) is an active-site residue. Residues Arg-45 and His-50 each coordinate 1-deoxy-D-xylulose 5-phosphate. Catalysis depends on Glu-70, which acts as the Proton acceptor. Thr-100 provides a ligand contact to 1-deoxy-D-xylulose 5-phosphate. The active-site Proton donor is the His-191. 3-amino-2-oxopropyl phosphate contacts are provided by residues Gly-192 and 213–214 (GH).

This sequence belongs to the PNP synthase family. Homooctamer; tetramer of dimers.

The protein resides in the cytoplasm. It catalyses the reaction 3-amino-2-oxopropyl phosphate + 1-deoxy-D-xylulose 5-phosphate = pyridoxine 5'-phosphate + phosphate + 2 H2O + H(+). It functions in the pathway cofactor biosynthesis; pyridoxine 5'-phosphate biosynthesis; pyridoxine 5'-phosphate from D-erythrose 4-phosphate: step 5/5. Catalyzes the complicated ring closure reaction between the two acyclic compounds 1-deoxy-D-xylulose-5-phosphate (DXP) and 3-amino-2-oxopropyl phosphate (1-amino-acetone-3-phosphate or AAP) to form pyridoxine 5'-phosphate (PNP) and inorganic phosphate. This chain is Pyridoxine 5'-phosphate synthase, found in Coxiella burnetii (strain Dugway 5J108-111).